Consider the following 67-residue polypeptide: DNA-directed RNA polymerase subunit omega (67 aa).

The protein belongs to the RNA polymerase subunit omega family. The RNAP catalytic core consists of 2 alpha, 1 beta, 1 beta' and 1 omega subunit. When a sigma factor is associated with the core the holoenzyme is formed, which can initiate transcription.

It catalyses the reaction RNA(n) + a ribonucleoside 5'-triphosphate = RNA(n+1) + diphosphate. In terms of biological role, promotes RNA polymerase assembly. Latches the N- and C-terminal regions of the beta' subunit thereby facilitating its interaction with the beta and alpha subunits. The protein is DNA-directed RNA polymerase subunit omega of Bacillus velezensis (strain DSM 23117 / BGSC 10A6 / LMG 26770 / FZB42) (Bacillus amyloliquefaciens subsp. plantarum).